We begin with the raw amino-acid sequence, 1123 residues long: Alpha-mannosidase E (1123 aa).

A signal peptide spans 1–21; it reads MNKTKLIKIIFVIGVWILLST. 2 N-linked (GlcNAc...) asparagine glycosylation sites follow: Asn2 and Asn38. Residues 22–1072 are Extracellular-facing; sequence FIINIYNENF…KYNRPNHLAL (1051 aa). 2 residues coordinate Zn(2+): His67 and Asp69. A glycan (N-linked (GlcNAc...) asparagine) is linked at Asn140. Positions 150 and 409 each coordinate Zn(2+). Asp150 acts as the Nucleophile in catalysis. 6 N-linked (GlcNAc...) asparagine glycosylation sites follow: Asn521, Asn675, Asn858, Asn887, Asn975, and Asn990. Residues 1073 to 1093 traverse the membrane as a helical segment; it reads ILSLSIGTPAGILIIVIALVV. The Cytoplasmic portion of the chain corresponds to 1094 to 1123; that stretch reads IYKKRKNRKTLTSSYSLLNLILKDRADSSP.

It belongs to the glycosyl hydrolase 38 family. It depends on Zn(2+) as a cofactor.

Its subcellular location is the membrane. The enzyme catalyses Hydrolysis of terminal, non-reducing alpha-D-mannose residues in alpha-D-mannosides.. This is Alpha-mannosidase E (manE) from Dictyostelium discoideum (Social amoeba).